The sequence spans 324 residues: o-succinylbenzoate synthase (324 aa).

The active-site Proton donor is lysine 135. Residues aspartate 163, glutamate 192, and aspartate 215 each contribute to the Mg(2+) site. Lysine 237 functions as the Proton acceptor in the catalytic mechanism.

The protein belongs to the mandelate racemase/muconate lactonizing enzyme family. MenC type 1 subfamily. The cofactor is a divalent metal cation.

The enzyme catalyses (1R,6R)-6-hydroxy-2-succinyl-cyclohexa-2,4-diene-1-carboxylate = 2-succinylbenzoate + H2O. The protein operates within quinol/quinone metabolism; 1,4-dihydroxy-2-naphthoate biosynthesis; 1,4-dihydroxy-2-naphthoate from chorismate: step 4/7. It participates in quinol/quinone metabolism; menaquinone biosynthesis. Converts 2-succinyl-6-hydroxy-2,4-cyclohexadiene-1-carboxylate (SHCHC) to 2-succinylbenzoate (OSB). The chain is o-succinylbenzoate synthase from Aliivibrio fischeri (strain MJ11) (Vibrio fischeri).